The sequence spans 600 residues: Protein GPR107 (600 aa).

A signal peptide spans 1 to 39 (MAALAPVGSPASRGPRLAAGLRLLPMLGLLQLLAEPGLG). The Extracellular portion of the chain corresponds to 40-263 (RVHHLALKDD…YLSAGEIPLP (224 aa)). Residues N70 and N169 are each glycosylated (N-linked (GlcNAc...) asparagine). C109 and C228 are oxidised to a cystine. Residues 157 to 175 (SQEPNVNPASAGNQTQKTQ) are compositionally biased toward polar residues. The segment at 157 to 185 (SQEPNVNPASAGNQTQKTQDGGKSKRSTV) is disordered. Over residues 176 to 185 (DGGKSKRSTV) the composition is skewed to basic and acidic residues. N-linked (GlcNAc...) asparagine glycosylation is present at N211. The helical transmembrane segment at 264 to 284 (KLYISMAFFFFLSGTIWIHIL) threads the bilayer. Residues 285 to 293 (RKRRNDVFK) are Cytoplasmic-facing. A helical membrane pass occupies residues 294 to 314 (IHWLMAALPFTKSLSLVFHAI). The Extracellular portion of the chain corresponds to 315 to 337 (DYHYISSQGFPIEGWAVVYYITH). The helical transmembrane segment at 338–358 (LLKGALLFITIALIGTGWAFI) threads the bilayer. The Cytoplasmic portion of the chain corresponds to 359-368 (KHILSDKDKK). A helical membrane pass occupies residues 369-389 (IFMIVIPLQVLANVAYIIIES). Over 390–402 (TEEGTTEYGLWKD) the chain is Extracellular. The helical transmembrane segment at 403–423 (SLFLVDLLCCGAILFPVVWSI) threads the bilayer. Residues 424–498 (RHLQEASATD…AKLKLFRHYY (75 aa)) lie on the Cytoplasmic side of the membrane. The chain crosses the membrane as a helical span at residues 499–519 (VLIVCYIYFTRIIAFLLKLAV). At 520–524 (PFQWK) the chain is on the extracellular side. The chain crosses the membrane as a helical span at residues 525–544 (WLYQLLDETATLVFFVLTGY). Residues 545–600 (KFRPASDNPYLQLSQEEEDLEMESVVTTSGVMESMKKVKKVTNGSVEPQGEWEGAV) lie on the Cytoplasmic side of the membrane.

This sequence belongs to the LU7TM family. In terms of processing, cleaved by FURIN to yield two fragments of 17 and 35 kDa that remain associated via a disulfide bond.

It is found in the cell membrane. Its subcellular location is the golgi apparatus. The protein resides in the trans-Golgi network membrane. Its function is as follows. Has been proposed to act as a receptor for neuronostatin, a peptide derived from the somatostatin/SST precursor. Involved in blood sugar regulation through the induction of glucagon in response to low glucose. In terms of biological role, (Microbial infection) Required for intoxication by Pseudomonas aeruginosa exotoxin A and Campylobacter jejuni CDT. May contribute to the retrograde transport of bacterial toxins, including cholera toxin, from the trans-Golgi network to the endoplasmic reticulum. The protein is Protein GPR107 (GPR107) of Homo sapiens (Human).